A 449-amino-acid chain; its full sequence is Ribosomal protein uS12 methylthiotransferase RimO (449 aa).

Positions 15–125 constitute an MTTase N-terminal domain; that stretch reads PRISFVSLGC…VLAAVHEAVP (111 aa). [4Fe-4S] cluster is bound by residues Cys24, Cys60, Cys89, Cys156, Cys160, and Cys163. Residues 142–379 form the Radical SAM core domain; that stretch reads LTPRHYAYLK…MRTQQKVSAR (238 aa). In terms of domain architecture, TRAM spans 382 to 448; sequence KRKVGTRQSV…PYDLSGTAVG (67 aa).

It belongs to the methylthiotransferase family. RimO subfamily. Requires [4Fe-4S] cluster as cofactor.

It is found in the cytoplasm. It carries out the reaction L-aspartate(89)-[ribosomal protein uS12]-hydrogen + (sulfur carrier)-SH + AH2 + 2 S-adenosyl-L-methionine = 3-methylsulfanyl-L-aspartate(89)-[ribosomal protein uS12]-hydrogen + (sulfur carrier)-H + 5'-deoxyadenosine + L-methionine + A + S-adenosyl-L-homocysteine + 2 H(+). Its function is as follows. Catalyzes the methylthiolation of an aspartic acid residue of ribosomal protein uS12. This Xanthobacter autotrophicus (strain ATCC BAA-1158 / Py2) protein is Ribosomal protein uS12 methylthiotransferase RimO.